The chain runs to 438 residues: Delta(14)-sterol reductase ERG24 (438 aa).

Residues 1–13 (MVSALNPRTTEFE) are Lumenal-facing. The chain crosses the membrane as a helical span at residues 14–34 (FGGLIGALGISIGLPVFTIIL). Over 35–71 (NQMIRPDYFIKGFFQNFDIVELWNGIKPLRYYLGNRE) the chain is Cytoplasmic. The chain crosses the membrane as a helical span at residues 72–90 (LWTVYCLWYGILAVLDVIL). Topologically, residues 91-109 (PGRVMKGVQLRDGSKLSYK) are lumenal. The chain crosses the membrane as a helical span at residues 110–127 (INGIAMSTTLVLVLAIRW). Residues 128–147 (KLTDGQLPELQYLYENHVSL) are Cytoplasmic-facing. A helical membrane pass occupies residues 148–172 (CIISILFSFFLATYCYVASFIPLIF). Over 173-242 (KKNGNGKREK…LHHHYLKTGK (70 aa)) the chain is Lumenal. The chain crosses the membrane as a helical span at residues 243-263 (INDALVLVNFLQGFYIFDGVL). At 264-308 (NEEGVLTMMDITTDGFGFMLAFGDLSLVPFTYSLQARYLSVSPVE) the chain is on the cytoplasmic side. A helical transmembrane segment spans residues 309 to 328 (LGWVKVVGILAIMFLGFHIF). Topologically, residues 329-368 (HSANKQKSEFRQGKLENLKSIQTKRGTKLLCDGWWAKSQH) are lumenal. NADP(+) is bound by residues Lys-335, Arg-339, Leu-358, Trp-363, 370 to 371 (NY), Asp-410, 414 to 418 (CRLKY), and Tyr-425. Residues 369-387 (INYFGDWLISLSWCLATWF) form a helical membrane-spanning segment. Topologically, residues 388–438 (QTPLTYYYSLYFATLLLHRQQRDEHKCRLKYGENWEEYERKVPYKIIPYVY) are cytoplasmic.

It belongs to the ERG4/ERG24 family.

It localises to the membrane. It catalyses the reaction 4,4-dimethyl-5alpha-cholesta-8,24-dien-3beta-ol + NADP(+) = 4,4-dimethyl-5alpha-cholesta-8,14,24-trien-3beta-ol + NADPH + H(+). The protein operates within steroid biosynthesis; zymosterol biosynthesis; zymosterol from lanosterol: step 2/6. Inhibited by the morpholine antifungal drug fenpropimorph. Its function is as follows. Delta(14)-sterol reductase; part of the third module of ergosterol biosynthesis pathway that includes the late steps of the pathway. ERG24 reduces the C14=C15 double bond of 4,4-dimethyl-cholesta-8,14,24-trienol to produce 4,4-dimethyl-cholesta-8,24-dienol. The third module or late pathway involves the ergosterol synthesis itself through consecutive reactions that mainly occur in the endoplasmic reticulum (ER) membrane. Firstly, the squalene synthase ERG9 catalyzes the condensation of 2 farnesyl pyrophosphate moieties to form squalene, which is the precursor of all steroids. Squalene synthase is crucial for balancing the incorporation of farnesyl diphosphate (FPP) into sterol and nonsterol isoprene synthesis. Secondly, the squalene epoxidase ERG1 catalyzes the stereospecific oxidation of squalene to (S)-2,3-epoxysqualene, which is considered to be a rate-limiting enzyme in steroid biosynthesis. Then, the lanosterol synthase ERG7 catalyzes the cyclization of (S)-2,3 oxidosqualene to lanosterol, a reaction that forms the sterol core. In the next steps, lanosterol is transformed to zymosterol through a complex process involving various demethylation, reduction and desaturation reactions. The lanosterol 14-alpha-demethylase ERG11 (also known as CYP51) catalyzes C14-demethylation of lanosterol to produce 4,4'-dimethyl cholesta-8,14,24-triene-3-beta-ol, which is critical for ergosterol biosynthesis. The C-14 reductase ERG24 reduces the C14=C15 double bond of 4,4-dimethyl-cholesta-8,14,24-trienol to produce 4,4-dimethyl-cholesta-8,24-dienol. 4,4-dimethyl-cholesta-8,24-dienol is substrate of the C-4 demethylation complex ERG25-ERG26-ERG27 in which ERG25 catalyzes the three-step monooxygenation required for the demethylation of 4,4-dimethyl and 4alpha-methylsterols, ERG26 catalyzes the oxidative decarboxylation that results in a reduction of the 3-beta-hydroxy group at the C-3 carbon to an oxo group, and ERG27 is responsible for the reduction of the keto group on the C-3. ERG28 has a role as a scaffold to help anchor ERG25, ERG26 and ERG27 to the endoplasmic reticulum and ERG29 regulates the activity of the iron-containing C4-methylsterol oxidase ERG25. Then, the sterol 24-C-methyltransferase ERG6 catalyzes the methyl transfer from S-adenosyl-methionine to the C-24 of zymosterol to form fecosterol. The C-8 sterol isomerase ERG2 catalyzes the reaction which results in unsaturation at C-7 in the B ring of sterols and thus converts fecosterol to episterol. The sterol-C5-desaturase ERG3 then catalyzes the introduction of a C-5 double bond in the B ring to produce 5-dehydroepisterol. The C-22 sterol desaturase ERG5 further converts 5-dehydroepisterol into ergosta-5,7,22,24(28)-tetraen-3beta-ol by forming the C-22(23) double bond in the sterol side chain. Finally, ergosta-5,7,22,24(28)-tetraen-3beta-ol is substrate of the C-24(28) sterol reductase ERG4 to produce ergosterol. The protein is Delta(14)-sterol reductase ERG24 of Saccharomyces cerevisiae (strain ATCC 204508 / S288c) (Baker's yeast).